Here is a 710-residue protein sequence, read N- to C-terminus: Dual specificity protein kinase shkE (710 aa).

3 stretches are compositionally biased toward low complexity: residues 83–94 (DVSDSNNNNSTS), 107–129 (NNNN…NNNN), and 197–208 (QKQQQSQASIQQ). 2 disordered regions span residues 83-136 (DVSD…PTVI) and 189-232 (QHLT…IPPE). Residues 237 to 495 (DVKTDLLGGG…EVTQRMNEVL (259 aa)) form the Protein kinase domain. Residues 243–251 (LGGGAYGKV) and Lys264 each bind ATP. Asp359 (proton acceptor) is an active-site residue. The SH2 domain occupies 597–707 (WFHFDISRDI…CPITEIKVPY (111 aa)).

Belongs to the protein kinase superfamily. Ser/Thr protein kinase family. SH2 domain-containing protein kinase subfamily.

The protein localises to the membrane. The enzyme catalyses L-seryl-[protein] + ATP = O-phospho-L-seryl-[protein] + ADP + H(+). The catalysed reaction is L-threonyl-[protein] + ATP = O-phospho-L-threonyl-[protein] + ADP + H(+). Its function is as follows. Required for proper chemotaxis and phagocytosis; proper spatiotemporal control of F-actin levels in chemotaxing cells. Negative regulator of the PI3K (phosphatidylinositol 3 kinase) pathway. Predominantly phosphorylates serines and threonines and tyrosines at a lower level. This Dictyostelium discoideum (Social amoeba) protein is Dual specificity protein kinase shkE (shkE).